Consider the following 612-residue polypeptide: MACPF domain-containing protein NSL1 (612 aa).

The region spanning 5–338 (NFTRLDAHSA…PPIEELHQFL (334 aa)) is the MACPF domain.

Belongs to the complement C6/C7/C8/C9 (TC 1.C.39) family.

Negatively controls the salicylic acid (SA)-mediated pathway of programmed cell death in plant immunity. This Arabidopsis thaliana (Mouse-ear cress) protein is MACPF domain-containing protein NSL1 (NSL1).